The chain runs to 479 residues: MNSQLQNNDKMIRTRFAPSPTGFLHIGGARTALFNWLLARRHGGAFLLRIEDTDRARSNPAAVEAILDGLSWMGLDWDGEPVSQFERADRHVEIAHELLARGHAFKCYCTAEETQLLRDEAFAAGRALRSPWRDRDASEARADTPFTIRFKAPDSDVVIEDAVQGQVRWAAKEFDDLILLRSDGTPTYNLAVVVDDHDMEITHIVRGDDHLVNAGRQSQIYDAMEWQRPVFAHVPLIHGQDGKKLSKRHGALGAEAYRDMGYLPEGLRNYLLRLGWSHGDQELFSDADAVAAFDLAGLNKAPARMDLDKLNHINGYHLAQASDDRLCELVTPFLDSLENRIEDINLTTARLKAAMPTLKTRAATLEELADQSYFLLRQRPIQLEGKAAKPLKDDETRQRLYRLFTHLGDLKAWNEAALSDALKQFAEAESVGFGKIGQPLRAALTGGAPAPDLALVMTFIGRDETLDRIKDQMTPATTE.

Residues proline 18–glycine 28 carry the 'HIGH' region motif. Positions lysine 244 to arginine 248 match the 'KMSKS' region motif. Lysine 247 contributes to the ATP binding site.

It belongs to the class-I aminoacyl-tRNA synthetase family. Glutamate--tRNA ligase type 1 subfamily. As to quaternary structure, monomer.

The protein localises to the cytoplasm. The catalysed reaction is tRNA(Glu) + L-glutamate + ATP = L-glutamyl-tRNA(Glu) + AMP + diphosphate. Its function is as follows. Catalyzes the attachment of glutamate to tRNA(Glu) in a two-step reaction: glutamate is first activated by ATP to form Glu-AMP and then transferred to the acceptor end of tRNA(Glu). This Maricaulis maris (strain MCS10) (Caulobacter maris) protein is Glutamate--tRNA ligase 2.